A 512-amino-acid chain; its full sequence is MVNDMIETIEYFAQAQPDFPVYDCLGERRSYGQLKEDSDSIAALIESLKLGEKSPVLVFGAQSYDMLASFVALTKTGHAYIPVDVHSAPERVLSIIEIAQPSLIIAIEELPVSIDAIRVVSLAEIEAAKAAKAAFTMTSPVKGDDNYYIIFTSGTTGQPKGVQISHANLLSFTNWMIEDAEFAIPERPQMLAQPPYSFDLSVMYWAPTLALGGTLFALPKEMVSDFKRLFSTIAELPIGIWTSTPSFADMAMLNDDFCQEKMPRLTHFYFDGEELTVSTARKLFERFPDARIINAYGPTEATVALSAISITKDMIETYTRLPIGYPKPDSPTYIIDEAGNALEPGQQGEIIVTGPAVSKGYLNNPEKTAEAFFTFNGMPAYHTGDLGSFTEDNVLLYGGRLDFQIKYAGYRIELEDVSQQLNQSPLVESAVAVPRYNKEHKVQNLLAYVVLKDGVREQFARDLDITKAIKASVKDHMMAYMMPSKFIYREKLPLTPNGKIDIKFLINEVNHQ.

An ATP-binding site is contributed by 152–153; that stretch reads TS. Residue Asp-199 participates in D-alanine binding. 294–299 serves as a coordination point for ATP; sequence NAYGPT. D-alanine is bound at residue Val-303. Residues Asp-385, 397–400, and Lys-499 contribute to the ATP site; that span reads YGGR. Lys-499 is a D-alanine binding site.

This sequence belongs to the ATP-dependent AMP-binding enzyme family. DltA subfamily.

It localises to the cytoplasm. The enzyme catalyses holo-[D-alanyl-carrier protein] + D-alanine + ATP = D-alanyl-[D-alanyl-carrier protein] + AMP + diphosphate. The protein operates within cell wall biogenesis; lipoteichoic acid biosynthesis. Catalyzes the first step in the D-alanylation of lipoteichoic acid (LTA), the activation of D-alanine and its transfer onto the D-alanyl carrier protein (Dcp) DltC. In an ATP-dependent two-step reaction, forms a high energy D-alanyl-AMP intermediate, followed by transfer of the D-alanyl residue as a thiol ester to the phosphopantheinyl prosthetic group of the Dcp. D-alanylation of LTA plays an important role in modulating the properties of the cell wall in Gram-positive bacteria, influencing the net charge of the cell wall. The chain is D-alanine--D-alanyl carrier protein ligase from Streptococcus equi subsp. equi (strain 4047).